The following is a 445-amino-acid chain: Eukaryotic translation initiation factor 3 subunit E (445 aa).

One can recognise a PCI domain in the interval 230-403; sequence FFNHVKGRDL…GHVVMGAQPL (174 aa).

The protein belongs to the eIF-3 subunit E family. As to quaternary structure, component of the eukaryotic translation initiation factor 3 (eIF-3) complex.

It localises to the cytoplasm. In terms of biological role, component of the eukaryotic translation initiation factor 3 (eIF-3) complex, which is involved in protein synthesis of a specialized repertoire of mRNAs and, together with other initiation factors, stimulates binding of mRNA and methionyl-tRNAi to the 40S ribosome. The eIF-3 complex specifically targets and initiates translation of a subset of mRNAs involved in cell proliferation. The chain is Eukaryotic translation initiation factor 3 subunit E (eIF3-S6) from Bombyx mori (Silk moth).